The primary structure comprises 461 residues: Bifunctional protein GlmU (461 aa).

A pyrophosphorylase region spans residues 1–236 (MNVLLQELFI…VFEIFGINNR (236 aa)). UDP-N-acetyl-alpha-D-glucosamine-binding positions include Lys-27, Gln-80, 85 to 86 (GT), 109 to 111 (YGD), Gly-146, Glu-160, Asn-175, and Asn-234. Asp-111 is a Mg(2+) binding site. Mg(2+) is bound at residue Asn-234. The linker stretch occupies residues 237–257 (FQLMKLEKIYQIEQAKKLLLN). The tract at residues 258–461 (GVTLSDYNRF…SILRKENNSK (204 aa)) is N-acetyltransferase. Lys-358 contributes to the UDP-N-acetyl-alpha-D-glucosamine binding site. The active-site Proton acceptor is His-370. UDP-N-acetyl-alpha-D-glucosamine is bound by residues Tyr-373 and Asn-384. Acetyl-CoA contacts are provided by Ala-387, Ala-430, and Arg-447.

It in the N-terminal section; belongs to the N-acetylglucosamine-1-phosphate uridyltransferase family. This sequence in the C-terminal section; belongs to the transferase hexapeptide repeat family. In terms of assembly, homotrimer. Mg(2+) is required as a cofactor.

It localises to the cytoplasm. It catalyses the reaction alpha-D-glucosamine 1-phosphate + acetyl-CoA = N-acetyl-alpha-D-glucosamine 1-phosphate + CoA + H(+). The enzyme catalyses N-acetyl-alpha-D-glucosamine 1-phosphate + UTP + H(+) = UDP-N-acetyl-alpha-D-glucosamine + diphosphate. Its pathway is nucleotide-sugar biosynthesis; UDP-N-acetyl-alpha-D-glucosamine biosynthesis; N-acetyl-alpha-D-glucosamine 1-phosphate from alpha-D-glucosamine 6-phosphate (route II): step 2/2. It participates in nucleotide-sugar biosynthesis; UDP-N-acetyl-alpha-D-glucosamine biosynthesis; UDP-N-acetyl-alpha-D-glucosamine from N-acetyl-alpha-D-glucosamine 1-phosphate: step 1/1. It functions in the pathway bacterial outer membrane biogenesis; LPS lipid A biosynthesis. In terms of biological role, catalyzes the last two sequential reactions in the de novo biosynthetic pathway for UDP-N-acetylglucosamine (UDP-GlcNAc). The C-terminal domain catalyzes the transfer of acetyl group from acetyl coenzyme A to glucosamine-1-phosphate (GlcN-1-P) to produce N-acetylglucosamine-1-phosphate (GlcNAc-1-P), which is converted into UDP-GlcNAc by the transfer of uridine 5-monophosphate (from uridine 5-triphosphate), a reaction catalyzed by the N-terminal domain. The chain is Bifunctional protein GlmU from Wigglesworthia glossinidia brevipalpis.